The following is an 86-amino-acid chain: uncharacterized protein (86 aa).

2 consecutive 4Fe-4S ferredoxin-type domains span residues 1-29 (MALL…IGDE) and 31-65 (YVID…PDPE). Positions 9, 12, 15, 19, 38, 41, 50, and 54 each coordinate [4Fe-4S] cluster.

It depends on [4Fe-4S] cluster as a cofactor.

This is an uncharacterized protein from Haemophilus influenzae (strain ATCC 51907 / DSM 11121 / KW20 / Rd).